The following is a 389-amino-acid chain: Na(+)/H(+) antiporter NhaA (389 aa).

11 consecutive transmembrane segments (helical) span residues 24 to 44 (ILLI…AGPA), 56 to 76 (LSIE…FVGL), 94 to 114 (LLPI…HYTL), 122 to 142 (AGTG…LALL), 152 to 172 (VFLT…IAMF), 176 to 196 (QFSL…LVLN), 216 to 236 (FLML…AFAI), 259 to 279 (PVAF…VIGS), 291 to 311 (LGII…LSFV), 326 to 346 (WTHI…SIFI), and 363 to 383 (MAIL…LSFF).

This sequence belongs to the NhaA Na(+)/H(+) (TC 2.A.33) antiporter family.

It is found in the cell inner membrane. The enzyme catalyses Na(+)(in) + 2 H(+)(out) = Na(+)(out) + 2 H(+)(in). In terms of biological role, na(+)/H(+) antiporter that extrudes sodium in exchange for external protons. This chain is Na(+)/H(+) antiporter NhaA, found in Dechloromonas aromatica (strain RCB).